Consider the following 480-residue polypeptide: UDP-glucose 6-dehydrogenase 3 (480 aa).

Residues 8-13 (GAGYVG), D33, R38, 86-90 (VNTPT), 127-128 (ST), and E161 each bind NAD(+). Residues 157–161 (EFLAE), 216–223 (KLAANAFL), and 256–269 (RIGP…VGFG) contribute to the substrate site. The active-site Nucleophile is C272. 272–275 (CFQK) is a binding site for NAD(+). 334-335 (FK) lines the substrate pocket. R342 lines the NAD(+) pocket. S393 carries the post-translational modification Phosphoserine. R447 is a substrate binding site.

It belongs to the UDP-glucose/GDP-mannose dehydrogenase family.

The enzyme catalyses UDP-alpha-D-glucose + 2 NAD(+) + H2O = UDP-alpha-D-glucuronate + 2 NADH + 3 H(+). Its pathway is nucleotide-sugar biosynthesis; UDP-alpha-D-glucuronate biosynthesis; UDP-alpha-D-glucuronate from UDP-alpha-D-glucose: step 1/1. Involved in the biosynthesis of UDP-glucuronic acid (UDP-GlcA), providing nucleotide sugars for cell-wall polymers. This is UDP-glucose 6-dehydrogenase 3 (UGD3) from Oryza sativa subsp. japonica (Rice).